The following is a 141-amino-acid chain: Hemoglobin subunit alpha (141 aa).

The region spanning 1-141 (VLSPADKTNV…VSTVLTSKYR (141 aa)) is the Globin domain. Ser3 bears the Phosphoserine mark. Lys7 is subject to N6-succinyllysine. Thr8 is subject to Phosphothreonine. Lys11 is subject to N6-succinyllysine. Lys16 carries the post-translational modification N6-acetyllysine; alternate. Lys16 carries the N6-succinyllysine; alternate modification. Tyr24 carries the phosphotyrosine modification. The residue at position 35 (Ser35) is a Phosphoserine. An N6-succinyllysine modification is found at Lys40. Phosphoserine is present on Ser49. His58 lines the O2 pocket. His87 is a heme b binding site. Ser102 is modified (phosphoserine). Thr108 carries the post-translational modification Phosphothreonine. Ser124 is modified (phosphoserine). A phosphothreonine mark is found at Thr134 and Thr137. Ser138 bears the Phosphoserine mark.

Belongs to the globin family. Heterotetramer of two alpha chains and two beta chains. In terms of tissue distribution, red blood cells.

Involved in oxygen transport from the lung to the various peripheral tissues. In terms of biological role, hemopressin acts as an antagonist peptide of the cannabinoid receptor CNR1. Hemopressin-binding efficiently blocks cannabinoid receptor CNR1 and subsequent signaling. The sequence is that of Hemoglobin subunit alpha (HBA) from Pteronura brasiliensis (Giant otter).